The sequence spans 252 residues: Flagellar L-ring protein (252 aa).

An N-terminal signal peptide occupies residues 1 to 25 (MSKSVPLQRIVLVAALMATGGLAGG). A lipid anchor (N-palmitoyl cysteine) is attached at Cys26. Cys26 is lipidated: S-diacylglycerol cysteine.

It belongs to the FlgH family. The basal body constitutes a major portion of the flagellar organelle and consists of four rings (L,P,S, and M) mounted on a central rod.

It localises to the cell outer membrane. It is found in the bacterial flagellum basal body. Functionally, assembles around the rod to form the L-ring and probably protects the motor/basal body from shearing forces during rotation. The chain is Flagellar L-ring protein from Rhodopseudomonas palustris (strain ATCC BAA-98 / CGA009).